Here is a 907-residue protein sequence, read N- to C-terminus: Protein translocase subunit SecA (907 aa).

ATP is bound by residues Q87, 105–109 (GEGKT), and D512. The interval 869–897 (AESLSAHTPVVREGEKVGRNDPCPCGSGR) is disordered. The segment covering 878-887 (VVREGEKVGR) has biased composition (basic and acidic residues). Zn(2+) contacts are provided by C891, C893, C902, and H903.

This sequence belongs to the SecA family. Monomer and homodimer. Part of the essential Sec protein translocation apparatus which comprises SecA, SecYEG and auxiliary proteins SecDF-YajC and YidC. Zn(2+) is required as a cofactor.

It is found in the cell inner membrane. The protein localises to the cytoplasm. It carries out the reaction ATP + H2O + cellular proteinSide 1 = ADP + phosphate + cellular proteinSide 2.. In terms of biological role, part of the Sec protein translocase complex. Interacts with the SecYEG preprotein conducting channel. Has a central role in coupling the hydrolysis of ATP to the transfer of proteins into and across the cell membrane, serving both as a receptor for the preprotein-SecB complex and as an ATP-driven molecular motor driving the stepwise translocation of polypeptide chains across the membrane. The sequence is that of Protein translocase subunit SecA from Shewanella sediminis (strain HAW-EB3).